Here is a 312-residue protein sequence, read N- to C-terminus: Glyoxylate/hydroxypyruvate reductase A (312 aa).

The active site involves Arg227. His275 acts as the Proton donor in catalysis.

It belongs to the D-isomer specific 2-hydroxyacid dehydrogenase family. GhrA subfamily.

Its subcellular location is the cytoplasm. The catalysed reaction is glycolate + NADP(+) = glyoxylate + NADPH + H(+). It carries out the reaction (R)-glycerate + NAD(+) = 3-hydroxypyruvate + NADH + H(+). It catalyses the reaction (R)-glycerate + NADP(+) = 3-hydroxypyruvate + NADPH + H(+). Its function is as follows. Catalyzes the NADPH-dependent reduction of glyoxylate and hydroxypyruvate into glycolate and glycerate, respectively. The sequence is that of Glyoxylate/hydroxypyruvate reductase A from Escherichia coli O127:H6 (strain E2348/69 / EPEC).